Reading from the N-terminus, the 254-residue chain is 3-deoxy-manno-octulosonate cytidylyltransferase (254 aa).

Belongs to the KdsB family.

The protein resides in the cytoplasm. The enzyme catalyses 3-deoxy-alpha-D-manno-oct-2-ulosonate + CTP = CMP-3-deoxy-beta-D-manno-octulosonate + diphosphate. It participates in nucleotide-sugar biosynthesis; CMP-3-deoxy-D-manno-octulosonate biosynthesis; CMP-3-deoxy-D-manno-octulosonate from 3-deoxy-D-manno-octulosonate and CTP: step 1/1. Its pathway is bacterial outer membrane biogenesis; lipopolysaccharide biosynthesis. Its function is as follows. Activates KDO (a required 8-carbon sugar) for incorporation into bacterial lipopolysaccharide in Gram-negative bacteria. This is 3-deoxy-manno-octulosonate cytidylyltransferase from Bordetella pertussis (strain Tohama I / ATCC BAA-589 / NCTC 13251).